The following is a 1092-amino-acid chain: DNA polymerase delta catalytic subunit (1092 aa).

The disordered stretch occupies residues 1–71 (MDGKRKFNGT…SRPPPPELDP (71 aa)). Positions 4 to 19 (KRKFNGTSNGHAKKPR) match the Nuclear localization signal motif. Zn(2+) is bound by residues Cys997, Cys1000, Cys1014, and Cys1017. The CysA-type zinc finger occupies 997–1017 (CLGCKSLMPKGYEQACLCPHC). Residues Cys1046, Cys1049, Cys1059, and Cys1064 each contribute to the [4Fe-4S] cluster site. The CysB motif signature appears at 1046 to 1064 (CQRCQESLHEEVICSNRDC).

It belongs to the DNA polymerase type-B family. As to quaternary structure, catalytic component of the DNA polymerase delta complex consisting of three subunits: the catalytic subunit PolD1 and two accessory subunits PolD2/Pol31 and PolD3/Pol32. Within the delta complex, interacts with both PolD2 and PolD3, and is able to interact with PolD2 in the absence of PolD3. Interacts with PCNA and PCNA2. [4Fe-4S] cluster serves as cofactor. Requires Mg(2+) as cofactor. As to expression, expressed in ovaries (at the protein level). Expressed in embryos (at the protein level).

It localises to the nucleus. The protein resides in the nucleoplasm. The catalysed reaction is DNA(n) + a 2'-deoxyribonucleoside 5'-triphosphate = DNA(n+1) + diphosphate. With respect to regulation, inhibited by KCL. Also inhibited by carbonyldiphosphonate, aphidicolin and N-ethylmaleimide (NEM). In terms of biological role, as the catalytic component of the DNA polymerase delta complex, plays a crucial role in high fidelity genome replication, including lagging strand synthesis, DNA recombination and repair. Exhibits both DNA polymerase and 3'- to 5'-exonuclease activities. Required at the nucleus of rapidly dividing embryonic cells to activate genome replication during the earliest cell cycles. Likely to require the presence of accessory proteins PolD2 and PolD3 for full activity. This chain is DNA polymerase delta catalytic subunit, found in Drosophila melanogaster (Fruit fly).